We begin with the raw amino-acid sequence, 267 residues long: 2-keto-3-deoxy-L-rhamnonate aldolase (267 aa).

Catalysis depends on His49, which acts as the Proton acceptor. Gln151 serves as a coordination point for substrate. Residue Glu153 coordinates Mg(2+). Substrate is bound by residues Ala178 and Asp179. Asp179 contributes to the Mg(2+) binding site.

It belongs to the HpcH/HpaI aldolase family. KDR aldolase subfamily. Homohexamer. Mg(2+) is required as a cofactor.

It carries out the reaction 2-dehydro-3-deoxy-L-rhamnonate = (S)-lactaldehyde + pyruvate. Catalyzes the reversible retro-aldol cleavage of 2-keto-3-deoxy-L-rhamnonate (KDR) to pyruvate and lactaldehyde. This Salmonella gallinarum (strain 287/91 / NCTC 13346) protein is 2-keto-3-deoxy-L-rhamnonate aldolase.